Here is a 337-residue protein sequence, read N- to C-terminus: Putative F-box protein At4g09870 (337 aa).

In terms of domain architecture, F-box spans 1 to 46 (MSISELSQDLLEEILCRVPAISLKKLRSTCKLWNSLFIDKRVRNEL).

The chain is Putative F-box protein At4g09870 from Arabidopsis thaliana (Mouse-ear cress).